Consider the following 251-residue polypeptide: Outer membrane protein assembly factor BamD (251 aa).

Residues 1 to 19 (MKLTKLLSALLVIGLVLGG) form the signal peptide. A lipid anchor (N-palmitoyl cysteine) is attached at Cys-20. Cys-20 carries the S-diacylglycerol cysteine lipid modification. TPR repeat units follow at residues 33–66 (IATLYNEGIILLDKKKYKKAAEEFGKIFYQHPGN), 70–103 (PQAELMQAYSLFLAAQYEEAVDILNMFINLHPAN), and 166–199 (AGKEMMIGRFYLKKKNPMAAINRFEEVIDNYQTT).

Belongs to the BamD family. As to quaternary structure, part of the Bam complex.

It is found in the cell outer membrane. In terms of biological role, part of the outer membrane protein assembly complex, which is involved in assembly and insertion of beta-barrel proteins into the outer membrane. In Rickettsia prowazekii (strain Madrid E), this protein is Outer membrane protein assembly factor BamD.